We begin with the raw amino-acid sequence, 76 residues long: Large ribosomal subunit protein uL29 (76 aa).

This sequence belongs to the universal ribosomal protein uL29 family.

The chain is Large ribosomal subunit protein uL29 from Corynebacterium aurimucosum (strain ATCC 700975 / DSM 44827 / CIP 107346 / CN-1) (Corynebacterium nigricans).